The primary structure comprises 604 residues: Baculoviral IAP repeat-containing protein 3 (604 aa).

The BIR 1 repeat unit spans residues 29–96; it reads ELYRMSTYST…RNLYPSCSFI (68 aa). Residue Arg-130 is modified to Omega-N-methylarginine. Ser-140 carries the phosphoserine modification. 2 BIR repeats span residues 169–235 and 255–322; these read EEDR…CPFV and LAAR…CEYL. Positions 292, 295, 312, and 319 each coordinate Zn(2+). One can recognise a CARD domain in the interval 439-529; sequence RESDDVSLIR…MLYKRFFVQQ (91 aa). The RING-type zinc finger occupies 557–592; the sequence is CKVCMDKEVSIVFIPCGHLVVCRDCAPSLRKCPICR.

This sequence belongs to the IAP family. In terms of assembly, interacts with PRSS25; the interaction inhibits apoptotic suppressor activity. The BIR motifs region interacts with TNF receptor associated factors 1 and 2 (TRAF1 and TRAF2) to form a heteromeric complex, which is then recruited to the tumor necrosis factor receptor 2 (TNFR2). Interaction with TRAF2 is required for ubiquitination of IKBKE, degradation of NFKBIA and activation of NF-kappa-B. Interacts with RIP1, RIP2, RIP3, RIP4 and USP19. Post-translationally, auto-ubiquitinated and degraded by the proteasome in apoptotic cells.

Its subcellular location is the cytoplasm. The protein resides in the nucleus. It catalyses the reaction S-ubiquitinyl-[E2 ubiquitin-conjugating enzyme]-L-cysteine + [acceptor protein]-L-lysine = [E2 ubiquitin-conjugating enzyme]-L-cysteine + N(6)-ubiquitinyl-[acceptor protein]-L-lysine.. USP19 regulates the stability of BIRC3/c-IAP2 by preventing its ubiquitination. Functionally, multi-functional protein which regulates not only caspases and apoptosis, but also modulates inflammatory signaling and immunity, mitogenic kinase signaling and cell proliferation, as well as cell invasion and metastasis. Acts as an E3 ubiquitin-protein ligase regulating NF-kappa-B signaling and regulates both canonical and non-canonical NF-kappa-B signaling by acting in opposite directions: acts as a positive regulator of the canonical pathway and suppresses constitutive activation of non-canonical NF-kappa-B signaling. The target proteins for its E3 ubiquitin-protein ligase activity include: RIPK1, RIPK2, RIPK3, RIPK4, CASP3, CASP7, CASP8, IKBKE, TRAF1, and BCL10. Acts as an important regulator of innate immune signaling via regulation of Toll-like receptors (TLRs), Nodlike receptors (NLRs) and RIG-I like receptors (RLRs), collectively referred to as pattern recognition receptors (PRRs). Protects cells from spontaneous formation of the ripoptosome, a large multi-protein complex that has the capability to kill cancer cells in a caspase-dependent and caspase-independent manner. Suppresses ripoptosome formation by ubiquitinating RIPK1 and CASP8. In Canis lupus familiaris (Dog), this protein is Baculoviral IAP repeat-containing protein 3 (BIRC3).